The following is a 155-amino-acid chain: Cyclic pyranopterin monophosphate synthase (155 aa).

Residues 75–77 (LCH) and 111–112 (ME) each bind substrate. Asp126 is an active-site residue.

Belongs to the MoaC family. Homohexamer; trimer of dimers.

The enzyme catalyses (8S)-3',8-cyclo-7,8-dihydroguanosine 5'-triphosphate = cyclic pyranopterin phosphate + diphosphate. It participates in cofactor biosynthesis; molybdopterin biosynthesis. Functionally, catalyzes the conversion of (8S)-3',8-cyclo-7,8-dihydroguanosine 5'-triphosphate to cyclic pyranopterin monophosphate (cPMP). This chain is Cyclic pyranopterin monophosphate synthase, found in Corynebacterium efficiens (strain DSM 44549 / YS-314 / AJ 12310 / JCM 11189 / NBRC 100395).